The primary structure comprises 220 residues: FMN-dependent NADH:quinone oxidoreductase (220 aa).

Residues Ser10, 17-19 (SAS), and 136-139 (SRGG) contribute to the FMN site. The tract at residues 200–220 (HSEAVTKAKELTERLTADNGR) is disordered.

This sequence belongs to the azoreductase type 1 family. As to quaternary structure, homodimer. It depends on FMN as a cofactor.

It carries out the reaction 2 a quinone + NADH + H(+) = 2 a 1,4-benzosemiquinone + NAD(+). The catalysed reaction is N,N-dimethyl-1,4-phenylenediamine + anthranilate + 2 NAD(+) = 2-(4-dimethylaminophenyl)diazenylbenzoate + 2 NADH + 2 H(+). Quinone reductase that provides resistance to thiol-specific stress caused by electrophilic quinones. Its function is as follows. Also exhibits azoreductase activity. Catalyzes the reductive cleavage of the azo bond in aromatic azo compounds to the corresponding amines. In Streptomyces coelicolor (strain ATCC BAA-471 / A3(2) / M145), this protein is FMN-dependent NADH:quinone oxidoreductase.